A 258-amino-acid polypeptide reads, in one-letter code: Imidazole glycerol phosphate synthase subunit HisF (258 aa).

Residues Asp-12 and Asp-131 contribute to the active site.

This sequence belongs to the HisA/HisF family. In terms of assembly, heterodimer of HisH and HisF.

The protein resides in the cytoplasm. It catalyses the reaction 5-[(5-phospho-1-deoxy-D-ribulos-1-ylimino)methylamino]-1-(5-phospho-beta-D-ribosyl)imidazole-4-carboxamide + L-glutamine = D-erythro-1-(imidazol-4-yl)glycerol 3-phosphate + 5-amino-1-(5-phospho-beta-D-ribosyl)imidazole-4-carboxamide + L-glutamate + H(+). It functions in the pathway amino-acid biosynthesis; L-histidine biosynthesis; L-histidine from 5-phospho-alpha-D-ribose 1-diphosphate: step 5/9. In terms of biological role, IGPS catalyzes the conversion of PRFAR and glutamine to IGP, AICAR and glutamate. The HisF subunit catalyzes the cyclization activity that produces IGP and AICAR from PRFAR using the ammonia provided by the HisH subunit. This is Imidazole glycerol phosphate synthase subunit HisF from Nitrosomonas eutropha (strain DSM 101675 / C91 / Nm57).